Here is a 232-residue protein sequence, read N- to C-terminus: 7-cyano-7-deazaguanine synthase (232 aa).

C7–A17 is an ATP binding site. Positions 185, 193, 196, and 199 each coordinate Zn(2+).

This sequence belongs to the QueC family. Zn(2+) is required as a cofactor.

The enzyme catalyses 7-carboxy-7-deazaguanine + NH4(+) + ATP = 7-cyano-7-deazaguanine + ADP + phosphate + H2O + H(+). Its pathway is purine metabolism; 7-cyano-7-deazaguanine biosynthesis. Functionally, catalyzes the ATP-dependent conversion of 7-carboxy-7-deazaguanine (CDG) to 7-cyano-7-deazaguanine (preQ(0)). The sequence is that of 7-cyano-7-deazaguanine synthase from Brucella abortus (strain S19).